A 107-amino-acid chain; its full sequence is N(4)-acetylcytidine amidohydrolase (107 aa).

An ASCH domain is found at 6–102 (TFYRRFQADI…RLYVISFSLV (97 aa)). Residue Lys20 is the Proton acceptor of the active site. The active-site Nucleophile is the Thr23. Glu73 functions as the Proton donor in the catalytic mechanism.

It belongs to the N(4)-acetylcytidine amidohydrolase family.

It catalyses the reaction N(4)-acetylcytidine + H2O = cytidine + acetate + H(+). The catalysed reaction is N(4)-acetyl-2'-deoxycytidine + H2O = 2'-deoxycytidine + acetate + H(+). The enzyme catalyses N(4)-acetylcytosine + H2O = cytosine + acetate + H(+). Catalyzes the hydrolysis of N(4)-acetylcytidine (ac4C). In Edwardsiella ictaluri (strain 93-146), this protein is N(4)-acetylcytidine amidohydrolase.